We begin with the raw amino-acid sequence, 71 residues long: DNA-directed RNA polymerase subunit omega (71 aa).

It belongs to the RNA polymerase subunit omega family. The RNAP catalytic core consists of 2 alpha, 1 beta, 1 beta' and 1 omega subunit. When a sigma factor is associated with the core the holoenzyme is formed, which can initiate transcription.

The catalysed reaction is RNA(n) + a ribonucleoside 5'-triphosphate = RNA(n+1) + diphosphate. Functionally, promotes RNA polymerase assembly. Latches the N- and C-terminal regions of the beta' subunit thereby facilitating its interaction with the beta and alpha subunits. This Syntrophomonas wolfei subsp. wolfei (strain DSM 2245B / Goettingen) protein is DNA-directed RNA polymerase subunit omega.